The following is a 449-amino-acid chain: MNHHLPSRPARSRQSQGLKGNLRVPGDKSISHRALMFGGLASGETRISGLLEGEDVLRTAEAMRAMGAQIDRRDGTWTIRGVGNGCLLEPEAPLDFGNAGTGSRLTMGLVGTYDMTTRFTGDASLSKRPMGRVLNPLREMGTQVLQAEPGDRLPITLRGPKHATPINYRVPMASAQVKSAVLLAGLNTPGVTTVIEPVMTRDHTEKMLSGFGAAIQIETDKEGARHISIQGQGTLKGQVIAVPGDPSSAAFPLVAALIVPGSDILIENVLMNPTRTGLILTLQEMGADIELLNRRSAGGEDVADLRVRSSALKGVTVPASRAPSMIDEYPILAVAASLAEGETVMLGLEELRVKESDRLSAVAEGLKVNGIDCTEGKDTLTVRGRPEGKGLGGATVTTHLDHRIAMAFLVLGLASERPVSVDDQSMIATSFPEFMDLMTGLGAEIEDRD.

Residues 1 to 26 are disordered; sequence MNHHLPSRPARSRQSQGLKGNLRVPG. 3 residues coordinate 3-phosphoshikimate: Lys-28, Ser-29, and Arg-33. Lys-28 lines the phosphoenolpyruvate pocket. Residues Gly-100 and Arg-128 each coordinate phosphoenolpyruvate. Positions 174, 176, 327, and 354 each coordinate 3-phosphoshikimate. Gln-176 is a phosphoenolpyruvate binding site. Asp-327 serves as the catalytic Proton acceptor. The phosphoenolpyruvate site is built by Arg-358 and Arg-403.

It belongs to the EPSP synthase family. Monomer.

It is found in the cytoplasm. It carries out the reaction 3-phosphoshikimate + phosphoenolpyruvate = 5-O-(1-carboxyvinyl)-3-phosphoshikimate + phosphate. It participates in metabolic intermediate biosynthesis; chorismate biosynthesis; chorismate from D-erythrose 4-phosphate and phosphoenolpyruvate: step 6/7. Functionally, catalyzes the transfer of the enolpyruvyl moiety of phosphoenolpyruvate (PEP) to the 5-hydroxyl of shikimate-3-phosphate (S3P) to produce enolpyruvyl shikimate-3-phosphate and inorganic phosphate. This chain is 3-phosphoshikimate 1-carboxyvinyltransferase, found in Chelativorans sp. (strain BNC1).